Here is a 342-residue protein sequence, read N- to C-terminus: Phosphate acyltransferase (342 aa).

Belongs to the PlsX family. Homodimer. Probably interacts with PlsY.

The protein localises to the cytoplasm. It catalyses the reaction a fatty acyl-[ACP] + phosphate = an acyl phosphate + holo-[ACP]. It participates in lipid metabolism; phospholipid metabolism. In terms of biological role, catalyzes the reversible formation of acyl-phosphate (acyl-PO(4)) from acyl-[acyl-carrier-protein] (acyl-ACP). This enzyme utilizes acyl-ACP as fatty acyl donor, but not acyl-CoA. The sequence is that of Phosphate acyltransferase from Shewanella baltica (strain OS155 / ATCC BAA-1091).